A 337-amino-acid polypeptide reads, in one-letter code: GTPase Obg (337 aa).

The Obg domain occupies 1–159 (MQFIDYVKIY…RWVILELKLL (159 aa)). Residues 160-331 (ADVGLIGLPN…LLHYLSEKVG (172 aa)) form the OBG-type G domain. GTP contacts are provided by residues 166–173 (GLPNAGKS), 191–195 (FTTLI), 213–216 (DIPG), 283–286 (TKID), and 312–314 (SAV). 2 residues coordinate Mg(2+): Ser173 and Thr193.

It belongs to the TRAFAC class OBG-HflX-like GTPase superfamily. OBG GTPase family. Monomer. Mg(2+) serves as cofactor.

The protein localises to the cytoplasm. Its function is as follows. An essential GTPase which binds GTP, GDP and possibly (p)ppGpp with moderate affinity, with high nucleotide exchange rates and a fairly low GTP hydrolysis rate. Plays a role in control of the cell cycle, stress response, ribosome biogenesis and in those bacteria that undergo differentiation, in morphogenesis control. This chain is GTPase Obg, found in Thermodesulfovibrio yellowstonii (strain ATCC 51303 / DSM 11347 / YP87).